The following is a 493-amino-acid chain: Amino acid permease 2 (493 aa).

Residues 1 to 49 (MGETAAANNHRHHHHHGHQVFDVASHDFVPPQPAFKCFDDDGRLKRTGT) lie on the Cytoplasmic side of the membrane. Transmembrane regions (helical) follow at residues 50–70 (VWTASAHIITAVIGSGVLSLA) and 71–91 (WAIAQLGWIAGPAVMLLFSLV). Topologically, residues 92–138 (TLYSSTLLSDCYRTGDAVSGKRNYTYMDAVRSILGGFKFKICGLIQY) are cytoplasmic. A helical membrane pass occupies residues 139-159 (LNLFGIAIGYTIAASISMMAI). Over 160-175 (KRSNCFHKSGGKDPCH) the chain is Extracellular. A helical transmembrane segment spans residues 176 to 196 (MSSNPYMIVFGVAEILLSQVP). Topologically, residues 197-200 (DFDQ) are cytoplasmic. Residues 201–221 (IWWISIVAAVMSFTYSAIGLA) form a helical membrane-spanning segment. The Extracellular portion of the chain corresponds to 222 to 253 (LGIVQVAANGVFKGSLTGISIGTVTQTQKIWR). A helical transmembrane segment spans residues 254 to 274 (TFQALGDIAFAYSYSVVLIEI). At 275–293 (QDTVRSPPAESKTMKKATK) the chain is on the cytoplasmic side. Residues 294–314 (ISIAVTTIFYMLCGSMGYAAF) traverse the membrane as a helical segment. Topologically, residues 315-340 (GDAAPGNLLTGFGFYNPFWLLDIANA) are extracellular. The helical transmembrane segment at 341 to 361 (AIVVHLVGAYQVFAQPIFAFI) threads the bilayer. Residues 362–396 (EKSVAERYPDNDFLSKEFEIRIPGFKSPYKVNVFR) are Cytoplasmic-facing. The helical transmembrane segment at 397–417 (MVYRSGFVVTTTVISMLMPFF) threads the bilayer. The Extracellular portion of the chain corresponds to 418–419 (ND). Residues 420–440 (VVGILGALGFWPLTVYFPVEM) form a helical membrane-spanning segment. Over 441–458 (YIKQRKVEKWSTRWVCLQ) the chain is Cytoplasmic. Residues 459-479 (MLSVACLVISVVAGVGSIAGV) form a helical membrane-spanning segment. Residues 480 to 493 (MLDLKVYKPFKSTY) lie on the Extracellular side of the membrane.

Belongs to the amino acid/polyamine transporter 2 family. Amino acid/auxin permease (AAAP) (TC 2.A.18.2) subfamily. Highly expressed in developing pods. Found in the vascular strands of siliques, cotyledons, leaves and roots, in the inner phloem of stems, and in the funiculi. Lower levels of expression in flowers. Not expressed in seeds.

The protein localises to the cell membrane. Inhibited by diethylpyrocarbonate (DEPC). Amino acid-proton symporter. Stereospecific transporter with a broad specificity for histidine, arginine, glutamate and neutral amino acids, favoring small amino acids such as alanine, asparagine and glutamine. Also accepts large aromatic residues such as phenlalanine or tyrosine. Has a much higher affinity for basic amino acids as compared with AAP1. May function in xylem-to-phloem transfer and in uptake of amino acids assimilated in the green silique tissue. In Arabidopsis thaliana (Mouse-ear cress), this protein is Amino acid permease 2 (AAP2).